The primary structure comprises 491 residues: MRFLLVLQLVFFYFSAATTNSPKKCSRNSINLGKLIDTLLTDYDTHLLPEAEGVNVTIELHVQGVSGISEITGDFSLDVMYSEIWQDPRLSFKHLNVCATNITLKSDFRKKIWTPDTCIINSKSSSIHSSPSENTFVILYENGLVWSNFRLNVKTPCSVNLKMFPFDSLSCEIVLESYSFNTDEVRLMWHDVPITMMEKVELPDFDLIGWSTDHQRLEYPNGIWDRAKVKFTFARRYGFYLFQSYFPTSLTVISSWVGFFFDVRSVSARITLGVSSLLALTFQFGNVLRHLPRVSYIKCLDVWMIFSVIFIFCTLVELAIVCQLNRWERERQIGSKVLGHWLNQIRKTRKKESKADEGGGGGVGGLLRKRIPVLAQLKAAATDSNSGAATAMTTAIQPPNTNLNSITNSDNSKLVANNFTSIEHETYAYEKKRGFSHCFQRFVYAICPPDRDWTITSVQVDRCSMIMFPLSFLIFNVVYWSIYFMKMDRPM.

A signal peptide spans 1–19 (MRFLLVLQLVFFYFSAATT). Asparagine 55 and asparagine 101 each carry an N-linked (GlcNAc...) asparagine glycan. A disulfide bridge connects residues cysteine 157 and cysteine 171. A run of 3 helical transmembrane segments spans residues 241–261 (LFQS…GFFF), 265–287 (SVSA…FGNV), and 302–322 (VWMI…AIVC). A glycan (N-linked (GlcNAc...) asparagine) is linked at asparagine 418. The chain crosses the membrane as a helical span at residues 465 to 485 (MIMFPLSFLIFNVVYWSIYFM).

It belongs to the ligand-gated ion channel (TC 1.A.9) family.

The protein resides in the postsynaptic cell membrane. Its subcellular location is the cell membrane. The sequence is that of Ligand-gated ion channel 50 (lgc-50) from Caenorhabditis elegans.